We begin with the raw amino-acid sequence, 157 residues long: Transcription elongation factor GreA (157 aa).

A coiled-coil region spans residues Leu14–Glu37.

This sequence belongs to the GreA/GreB family.

Functionally, necessary for efficient RNA polymerase transcription elongation past template-encoded arresting sites. The arresting sites in DNA have the property of trapping a certain fraction of elongating RNA polymerases that pass through, resulting in locked ternary complexes. Cleavage of the nascent transcript by cleavage factors such as GreA or GreB allows the resumption of elongation from the new 3'terminus. GreA releases sequences of 2 to 3 nucleotides. The chain is Transcription elongation factor GreA from Vibrio vulnificus (strain CMCP6).